Reading from the N-terminus, the 413-residue chain is Serine protease inhibitor A3L (413 aa).

A signal peptide spans 1-28 (MAFIAALGLLMAGICPAVLCDGTLGRDT). A Phosphoserine modification is found at Ser-30. 4 N-linked (GlcNAc...) asparagine glycosylation sites follow: Asn-102, Asn-182, Asn-220, and Asn-267. The interval 365–389 (GTEATAATGVATVIRRQPRTLNFNR) is RCL.

Belongs to the serpin family. In terms of processing, N-glycosylated. Liver.

It is found in the secreted. The polypeptide is Serine protease inhibitor A3L (Serpina3l) (Rattus norvegicus (Rat)).